Here is a 215-residue protein sequence, read N- to C-terminus: Probable phosphoglycerate mutase GpmB (215 aa).

Residues 8–15 (RHGETEWN), 21–22 (QG), arginine 58, 82–85 (ELDM), and 151–152 (GI) each bind substrate. Histidine 9 functions as the Tele-phosphohistidine intermediate in the catalytic mechanism. Glutamate 82 acts as the Proton donor/acceptor in catalysis.

This sequence belongs to the phosphoglycerate mutase family. GpmB subfamily.

It carries out the reaction (2R)-2-phosphoglycerate = (2R)-3-phosphoglycerate. It functions in the pathway carbohydrate degradation; glycolysis; pyruvate from D-glyceraldehyde 3-phosphate: step 3/5. This chain is Probable phosphoglycerate mutase GpmB, found in Proteus mirabilis (strain HI4320).